The chain runs to 85 residues: Alpha-mammal toxin AaH2 (85 aa).

The signal sequence occupies residues 1 to 19 (MNYLVMISLALLFVTGVES). The LCN-type CS-alpha/beta domain maps to 21–83 (KDGYIVDDVN…VRTKGPGRCH (63 aa)). Disulfide bonds link C31–C82, C35–C55, C41–C65, and C45–C67. Histidine amide is present on H83.

Belongs to the long (4 C-C) scorpion toxin superfamily. Sodium channel inhibitor family. Alpha subfamily. The amidation of His-83 is not necessary for toxicity. As to expression, expressed by the venom gland.

It localises to the secreted. Its function is as follows. Alpha toxin that binds voltage-independently at site-3 of sodium channels (Nav), inhibits the inactivation of the activated channels, and weakly inhibits activation, thereby blocking neuronal transmission. Inserts into voltage-sensing domain IV to stabilize a deactivated state, thereby preventing fast-inactivation. Principally slows the inactivation process of TTX-sensitive sodium channels. It is active on mammalian brain Nav1.2/SCN2A (EC(50)human=0.72 nM, EC(50)rat=2.6 nM), on rat skeletal muscle Nav1.4/SCN4A (EC(50)=2.2 nM), and on human neuronal Nav1.7/SCN9A (EC(50)=6.8-51.7 nM). In vivo, intraplantar injection into mice induces spontaneous pain responses. The polypeptide is Alpha-mammal toxin AaH2 (Androctonus australis (Sahara scorpion)).